Reading from the N-terminus, the 421-residue chain is Solute carrier family 35 member F3 (421 aa).

The segment at 25 to 53 is disordered; it reads EGEERPREPPGPAEAQAPAGTEAGGRTSR. The span at 37-49 shows a compositional bias: low complexity; it reads AEAQAPAGTEAGG. 10 helical membrane passes run 66-86, 98-118, 149-169, 179-199, 208-228, 232-252, 266-286, 305-325, 326-346, and 352-372; these read VFWG…STQL, FTLT…YYAG, VFFT…YLYL, DVSV…WIVL, IVAA…DGFH, VIGI…KVLF, LFLS…PVIL, LCGF…GIAV, TYPT…AVVD, and IVFN…FLLL. The segment at 394 to 421 is disordered; sequence KEETAESSGDLGTGPQSRSRRARPSFAR. Residues 411-421 are compositionally biased toward basic residues; that stretch reads RSRRARPSFAR.

The protein belongs to the SLC35F solute transporter family.

It localises to the membrane. The enzyme catalyses thiamine(in) = thiamine(out). Its function is as follows. Mediates thiamine transport. This Mus musculus (Mouse) protein is Solute carrier family 35 member F3 (Slc35f3).